Reading from the N-terminus, the 66-residue chain is Heat-stable enterotoxin (66 aa).

Positions 1–19 (MKKIVFVLVLMLSSFGTFG) are cleaved as a signal peptide. A propeptide spanning residues 20 to 50 (QETASRQFGDAFSTPIAAEVNKKACDTELPP) is cleaved from the precursor. Disulfide bonds link C54-C59, C55-C63, and C58-C66.

The protein belongs to the heat-stable enterotoxin family.

The protein localises to the secreted. In terms of biological role, toxin which activates the particulate form of guanylate cyclase and increases cyclic GMP levels within the host intestinal epithelial cells. In Yersinia kristensenii, this protein is Heat-stable enterotoxin (yst).